A 314-amino-acid polypeptide reads, in one-letter code: Pectin lyase (314 aa).

Arg202 is a catalytic residue.

This sequence belongs to the polysaccharide lyase 1 family.

The enzyme catalyses Eliminative cleavage of (1-&gt;4)-alpha-D-galacturonan methyl ester to give oligosaccharides with 4-deoxy-6-O-methyl-alpha-D-galact-4-enuronosyl groups at their non-reducing ends.. This chain is Pectin lyase (pnl), found in Pectobacterium carotovorum (Erwinia carotovora).